The following is a 144-amino-acid chain: Virulence protein STM3117 (144 aa).

A VOC domain is found at 23–143; it reads RIDHLVLTVS…DGNLIEISQY (121 aa).

Its function is as follows. Is critically involved in promoting the replication of S.typhimurium cells inside host macrophages, suggesting a role in the establishment of bacterial colonization within macrophages. May be involved in the biosynthesis and modification of the peptidoglycan layer of the cell wall. This Salmonella typhimurium (strain LT2 / SGSC1412 / ATCC 700720) protein is Virulence protein STM3117.